Here is a 110-residue protein sequence, read N- to C-terminus: UPF0060 membrane protein Bpet0062 (110 aa).

4 consecutive transmembrane segments (helical) span residues 7–27 (LGLFALTAVAEIVGCYLPYLW), 33–53 (SAWLLVPAALSLAVFAWLLTL), 63–83 (AAYGGVYVSMALLWLWAVDGV), and 86–106 (ATTDWAGVGLCLAGMALIMAG).

Belongs to the UPF0060 family.

It localises to the cell inner membrane. The sequence is that of UPF0060 membrane protein Bpet0062 from Bordetella petrii (strain ATCC BAA-461 / DSM 12804 / CCUG 43448).